Here is a 301-residue protein sequence, read N- to C-terminus: Probable alpha-L-glutamate ligase 2 (301 aa).

Residues 104–287 enclose the ATP-grasp domain; that stretch reads MQLLSRKGIG…VASMIIEFIV (184 aa). Residues Lys-141, 178-179, Asp-187, and 211-213 each bind ATP; these read EY and RSN. Asp-248, Glu-260, and Asn-262 together coordinate Mg(2+). Asp-248, Glu-260, and Asn-262 together coordinate Mn(2+).

Belongs to the RimK family. The cofactor is Mg(2+). Mn(2+) is required as a cofactor.

The polypeptide is Probable alpha-L-glutamate ligase 2 (Pseudoalteromonas atlantica (strain T6c / ATCC BAA-1087)).